Consider the following 387-residue polypeptide: 3-ketoacyl-CoA thiolase (387 aa).

Cys-91 acts as the Acyl-thioester intermediate in catalysis. Residues His-343 and Cys-373 each act as proton acceptor in the active site.

It belongs to the thiolase-like superfamily. Thiolase family. In terms of assembly, heterotetramer of two alpha chains (FadB) and two beta chains (FadA).

Its subcellular location is the cytoplasm. It carries out the reaction an acyl-CoA + acetyl-CoA = a 3-oxoacyl-CoA + CoA. It participates in lipid metabolism; fatty acid beta-oxidation. In terms of biological role, catalyzes the final step of fatty acid oxidation in which acetyl-CoA is released and the CoA ester of a fatty acid two carbons shorter is formed. This Shewanella sp. (strain MR-7) protein is 3-ketoacyl-CoA thiolase.